A 580-amino-acid chain; its full sequence is Frizzled and smoothened-like protein K (580 aa).

The first 18 residues, 1 to 18, serve as a signal peptide directing secretion; it reads MRVLFILFLFYFYTYTEA. Residues 19–236 lie on the Extracellular side of the membrane; sequence QQYYPIDPTG…QWDNIFDTSD (218 aa). Residues 25–154 form the FZ domain; that stretch reads DPTGKCEQYI…SSDYNLTTYG (130 aa). 5 N-linked (GlcNAc...) asparagine glycosylation sites follow: asparagine 52, asparagine 97, asparagine 149, asparagine 170, and asparagine 186. A helical membrane pass occupies residues 237–257; that stretch reads AISLVSLLCSVYLFITYMVIN. Topologically, residues 258-264 are cytoplasmic; that stretch reads PKRNKYD. Residues 265-285 form a helical membrane-spanning segment; sequence YFFSFFVLSIILMSIAGTIGF. The Extracellular segment spans residues 286–308; the sequence is SVGGTRKLLCPEINRRGVYTDPA. A helical membrane pass occupies residues 309 to 329; sequence VAAAGWIFQFAIINAILWFSI. The Cytoplasmic portion of the chain corresponds to 330–349; that stretch reads NSFELWFQIKFIKRKLHLIK. A helical transmembrane segment spans residues 350-370; that stretch reads FYILAVLVISIALSVPLSAIG. Residues 371-391 are Extracellular-facing; it reads EFNAGLGNFVVWIESGKYQNW. A helical membrane pass occupies residues 392–412; the sequence is FFWGPLGIVLTVGTTFIGLVI. At 413 to 434 the chain is on the cytoplasmic side; it reads WEIYKIVSSTNKSDFFKLQLKP. The chain crosses the membrane as a helical span at residues 435–455; the sequence is LMNMLLIYLTFVYLFGYNFYI. The Extracellular segment spans residues 456 to 490; that stretch reads HNSLNGFYGSSEEFKNCIISTDGKDCRIQGPPYSS. A helical transmembrane segment spans residues 491-511; it reads ILMFVFCLRIYGVYCIALYGF. The Cytoplasmic segment spans residues 512 to 580; the sequence is SPKTRSIWSN…SMEPDEIILR (69 aa). The Lys-Thr-X-X-X-Trp motif, mediates interaction with the PDZ domain of Dvl family members motif lies at 514–519; it reads KTRSIW. Residues 542–580 form a disordered region; that stretch reads TTKGGTSSTDIKMSTNNNSNMDSGGGKSSSMEPDEIILR. A compositionally biased stretch (polar residues) spans 551–563; it reads DIKMSTNNNSNMD.

It belongs to the G-protein coupled receptor Fz/Smo family.

The protein resides in the membrane. The protein is Frizzled and smoothened-like protein K (fslK) of Dictyostelium discoideum (Social amoeba).